The following is a 321-amino-acid chain: MHKYQTHWVESSEIKILSDKGKKHIALVAGGMSAEREVSLISAEGVGKALIEAGYKVTFIDMGADITVKLHEIKPDIVFNCLHGTYGEDGCLPGLLNIMRIPYTHSGVLASSLAFDKVHSRSWFLTNNINMAESIVISKGDNIKTDPIKRPYVIKPFTQGSSIGVEVIFEEDDFNFANYDFPYGDEVIIEKYIKGRELQVAILNGKALGALEIKLLKNRFYDYETKYTEGFAEHLCPAPLPTDIYDKLLKESEKIYNTMNCKGAARVEFILEDGTNKLYALEINTHPGMTPLSIVPEIAAYHGIDFVNLIEEILKTASFES.

An ATP-grasp domain is found at 121–315 (RSWFLTNNIN…FVNLIEEILK (195 aa)). Residue 148–199 (IKRPYVIKPFTQGSSIGVEVIFEEDDFNFANYDFPYGDEVIIEKYIKGRELQ) coordinates ATP. Mg(2+) is bound by residues glutamate 268, glutamate 282, and asparagine 284.

The protein belongs to the D-alanine--D-alanine ligase family. Requires Mg(2+) as cofactor. Mn(2+) serves as cofactor.

The protein resides in the cytoplasm. It catalyses the reaction 2 D-alanine + ATP = D-alanyl-D-alanine + ADP + phosphate + H(+). The protein operates within cell wall biogenesis; peptidoglycan biosynthesis. Functionally, cell wall formation. The sequence is that of D-alanine--D-alanine ligase from Rickettsia bellii (strain RML369-C).